Consider the following 231-residue polypeptide: Large ribosomal subunit protein uL1 (231 aa).

The protein belongs to the universal ribosomal protein uL1 family. In terms of assembly, part of the 50S ribosomal subunit.

Functionally, binds directly to 23S rRNA. The L1 stalk is quite mobile in the ribosome, and is involved in E site tRNA release. Its function is as follows. Protein L1 is also a translational repressor protein, it controls the translation of the L11 operon by binding to its mRNA. In Agrobacterium fabrum (strain C58 / ATCC 33970) (Agrobacterium tumefaciens (strain C58)), this protein is Large ribosomal subunit protein uL1.